The following is a 176-amino-acid chain: CASP-like protein 5A1 (176 aa).

Topologically, residues 1-45 (MDASHPAVYPVGVPPTAVDPPPRVRMKDYEGMPSTLGGLVLRSGQ) are cytoplasmic. Residues 46 to 66 (FACAVTALSIMISIPDFSSVT) traverse the membrane as a helical segment. Ala-67 is a topological domain (extracellular). Residues 68–88 (FCYLVAAMALQLLWSVSLAVV) traverse the membrane as a helical segment. Residues 89 to 102 (DGYALLLRRTLHNP) are Cytoplasmic-facing. A helical transmembrane segment spans residues 103–123 (VLLSLLVIGDWVTSTLSLAAA). Topologically, residues 124–151 (CSSAGITVLIDSDLAQCAHNHCGRYEAA) are extracellular. A helical membrane pass occupies residues 152–172 (VAMAFLTWFLVSLSFFFSFWL). The Cytoplasmic portion of the chain corresponds to 173–176 (LATR).

The protein belongs to the Casparian strip membrane proteins (CASP) family. As to quaternary structure, homodimer and heterodimers.

It is found in the cell membrane. The protein is CASP-like protein 5A1 of Selaginella moellendorffii (Spikemoss).